Here is a 300-residue protein sequence, read N- to C-terminus: Protoheme IX farnesyltransferase (300 aa).

8 consecutive transmembrane segments (helical) span residues 24-44 (VTQL…PGMV), 46-66 (WHVL…AFAI), 94-114 (PQIL…LYTF), 118-138 (LTMW…TLLL), 146-166 (IVIG…AVTG), 172-192 (AWIL…VLAL), 224-244 (VILF…VVYL), and 278-298 (IVYL…RPLL).

It belongs to the UbiA prenyltransferase family. Protoheme IX farnesyltransferase subfamily.

It localises to the cell inner membrane. The enzyme catalyses heme b + (2E,6E)-farnesyl diphosphate + H2O = Fe(II)-heme o + diphosphate. Its pathway is porphyrin-containing compound metabolism; heme O biosynthesis; heme O from protoheme: step 1/1. Its function is as follows. Converts heme B (protoheme IX) to heme O by substitution of the vinyl group on carbon 2 of heme B porphyrin ring with a hydroxyethyl farnesyl side group. The chain is Protoheme IX farnesyltransferase from Burkholderia ambifaria (strain ATCC BAA-244 / DSM 16087 / CCUG 44356 / LMG 19182 / AMMD) (Burkholderia cepacia (strain AMMD)).